The sequence spans 449 residues: GPI mannosyltransferase 2 (449 aa).

Residues 1–7 (MTEKVTK) are Cytoplasmic-facing. A helical transmembrane segment spans residues 8 to 28 (LALASRLIVLLVQLVANGALP). At 29-82 (EHKPDVFRMPVSSDQNASWIDKVIKRCLGGLRHWDGEYFLHIAENLYSYENTLA) the chain is on the lumenal side. Residue Asn-44 is glycosylated (N-linked (GlcNAc...) asparagine). A helical transmembrane segment spans residues 83-103 (FYPLYPVVVRHVGQAVEAIGI). Topologically, residues 104-109 (SLSQES) are cytoplasmic. A helical transmembrane segment spans residues 110 to 130 (ILLVVAVALNFWLFCESANLL). Topologically, residues 131-148 (FQLTQVLFNDLNKSWNAA) are lumenal. An N-linked (GlcNAc...) asparagine glycan is attached at Asn-142. The chain crosses the membrane as a helical span at residues 149 to 169 (LIYCFNPATIFFTAAYSETFF). Over 170-196 (AYSSLHLMLECSKPTGSFRYLRLGTAL) the chain is Cytoplasmic. A helical membrane pass occupies residues 197-217 (AACLLCRSNGLITLGYPLYFF). The Lumenal segment spans residues 218–235 (GRQLLLKNKEPNTCMQLT). Residues 236-256 (QMTLTILGAIGILHTYYFYIY) form a helical membrane-spanning segment. Residues 257–368 (RLYCLPNTRP…GFKELIRDHT (112 aa)) are Cytoplasmic-facing. A helical transmembrane segment spans residues 369-389 (TFPFVLHAAILTLVCTVYVHI). Over 390 to 423 (QVSTRLLASATPVFYWFAADHMPKTLAQLKLRSK) the chain is Lumenal. Residues 424–444 (AGALFVWCTTYSLVGTVLFSN) form a helical membrane-spanning segment. The Cytoplasmic portion of the chain corresponds to 445 to 449 (NYPWT).

Belongs to the PIGV family.

Its subcellular location is the endoplasmic reticulum membrane. The protein operates within glycolipid biosynthesis; glycosylphosphatidylinositol-anchor biosynthesis. Its function is as follows. Mannosyltransferase involved in glycosylphosphatidylinositol-anchor biosynthesis. Transfers the second mannose to the glycosylphosphatidylinositol during GPI precursor assembly. Required for the GPI-mediated endoplasmic reticulum exit and proper targeting to the cell surface of chp. Required for GPI-mediated membrane attachment of chp, qsm and Cont. Essential for microvillar stability in the rhabdomere. In Drosophila melanogaster (Fruit fly), this protein is GPI mannosyltransferase 2.